The sequence spans 443 residues: UDP-N-acetylmuramoylalanine--D-glutamate ligase (443 aa).

116–122 (GTNGKST) contacts ATP.

It belongs to the MurCDEF family.

Its subcellular location is the cytoplasm. The enzyme catalyses UDP-N-acetyl-alpha-D-muramoyl-L-alanine + D-glutamate + ATP = UDP-N-acetyl-alpha-D-muramoyl-L-alanyl-D-glutamate + ADP + phosphate + H(+). The protein operates within cell wall biogenesis; peptidoglycan biosynthesis. Functionally, cell wall formation. Catalyzes the addition of glutamate to the nucleotide precursor UDP-N-acetylmuramoyl-L-alanine (UMA). The protein is UDP-N-acetylmuramoylalanine--D-glutamate ligase of Novosphingobium aromaticivorans (strain ATCC 700278 / DSM 12444 / CCUG 56034 / CIP 105152 / NBRC 16084 / F199).